A 141-amino-acid polypeptide reads, in one-letter code: Nucleoside diphosphate kinase (141 aa).

Lys11, Phe59, Arg87, Thr93, Arg104, and Asn114 together coordinate ATP. His117 serves as the catalytic Pros-phosphohistidine intermediate.

It belongs to the NDK family. Homotetramer. Mg(2+) is required as a cofactor.

Its subcellular location is the cytoplasm. It carries out the reaction a 2'-deoxyribonucleoside 5'-diphosphate + ATP = a 2'-deoxyribonucleoside 5'-triphosphate + ADP. The catalysed reaction is a ribonucleoside 5'-diphosphate + ATP = a ribonucleoside 5'-triphosphate + ADP. Its function is as follows. Major role in the synthesis of nucleoside triphosphates other than ATP. The ATP gamma phosphate is transferred to the NDP beta phosphate via a ping-pong mechanism, using a phosphorylated active-site intermediate. The chain is Nucleoside diphosphate kinase from Vibrio campbellii (strain ATCC BAA-1116).